A 570-amino-acid chain; its full sequence is Hydroxylamine reductase (570 aa).

Residues Cys5, Cys8, Cys17, and Cys23 each coordinate [4Fe-4S] cluster. Residues His266, Glu290, Cys334, Cys425, Cys453, Cys478, Glu513, and Lys515 each contribute to the hybrid [4Fe-2O-2S] cluster site. Cys425 carries the cysteine persulfide modification.

This sequence belongs to the HCP family. [4Fe-4S] cluster serves as cofactor. The cofactor is hybrid [4Fe-2O-2S] cluster.

It localises to the cytoplasm. It carries out the reaction A + NH4(+) + H2O = hydroxylamine + AH2 + H(+). In terms of biological role, catalyzes the reduction of hydroxylamine to form NH(3) and H(2)O. The chain is Hydroxylamine reductase from Clostridium botulinum (strain Kyoto / Type A2).